The sequence spans 647 residues: 1-deoxy-D-xylulose-5-phosphate synthase (647 aa).

Thiamine diphosphate is bound by residues H88 and 129–131; that span reads GHA. D160 contacts Mg(2+). Thiamine diphosphate contacts are provided by residues 161–162, N189, Y300, and E377; that span reads GA. N189 contacts Mg(2+).

This sequence belongs to the transketolase family. DXPS subfamily. Homodimer. Requires Mg(2+) as cofactor. The cofactor is thiamine diphosphate.

The enzyme catalyses D-glyceraldehyde 3-phosphate + pyruvate + H(+) = 1-deoxy-D-xylulose 5-phosphate + CO2. Its pathway is metabolic intermediate biosynthesis; 1-deoxy-D-xylulose 5-phosphate biosynthesis; 1-deoxy-D-xylulose 5-phosphate from D-glyceraldehyde 3-phosphate and pyruvate: step 1/1. In terms of biological role, catalyzes the acyloin condensation reaction between C atoms 2 and 3 of pyruvate and glyceraldehyde 3-phosphate to yield 1-deoxy-D-xylulose-5-phosphate (DXP). In Dehalococcoides mccartyi (strain ATCC BAA-2266 / KCTC 15142 / 195) (Dehalococcoides ethenogenes (strain 195)), this protein is 1-deoxy-D-xylulose-5-phosphate synthase.